A 297-amino-acid polypeptide reads, in one-letter code: MRGGFGRGGGGRGGSRGGRGGFGRGGGRGGGRGGGRGGGRGGGRGGGRGGGRGGAGAKVIVEPHMLHPGVFISKAKTDSLCTLNMVPGISVYGEKRIELGATQGGDDKKEYRLWNPYRSKLASAIYAGVSSIHMGPGSKVLYLGGATGTTVSHVSDLVGPEGMVYAVEFSHRVGRDLVEMSKRRPIVPIVEDARYPMKYRMLVPMVDCIFMDVAQPDQARILALNAQAFLQNGGHYVISIKANCIDSTLEAPVVIASELNKLKKDKLKPLEQVSLEPFERDHAVVVGVYRPVKKSKQ.

Residues Met-1–Gly-56 form a disordered region. 13 positions are modified to asymmetric dimethylarginine: Arg-2, Arg-7, Arg-12, Arg-16, Arg-19, Arg-24, Arg-28, Arg-32, Arg-36, Arg-40, Arg-44, Arg-48, and Arg-52. Residues Thr-149–Thr-150, Glu-168–Phe-169, Asp-192–Ala-193, and Asp-212–Gln-215 each bind S-adenosyl-L-methionine.

The protein belongs to the methyltransferase superfamily. Fibrillarin family. As to quaternary structure, component of box C/D small nucleolar ribonucleoprotein (snoRNP) particles. It is associated with the U3, U8 and U13 small nuclear RNAs. By homology to other fibrillarins, some or all of the N-terminal domain arginines are modified to asymmetric dimethylarginine (DMA).

It is found in the nucleus. It localises to the nucleolus. The enzyme catalyses L-glutaminyl-[histone H2A] + S-adenosyl-L-methionine = N(5)-methyl-L-glutaminyl-[histone H2A] + S-adenosyl-L-homocysteine + H(+). Its function is as follows. S-adenosyl-L-methionine-dependent methyltransferase that has the ability to methylate both RNAs and proteins. Involved in pre-rRNA processing. Utilizes the methyl donor S-adenosyl-L-methionine to catalyze the site-specific 2'-hydroxyl methylation of ribose moieties in pre-ribosomal RNA. Site specificity is provided by a guide RNA that base pairs with the substrate. Methylation occurs at a characteristic distance from the sequence involved in base pairing with the guide RNA. Also acts as a protein methyltransferase by mediating methylation of 'Gln-105' of histone H2A (H2AQ105me), a modification that impairs binding of the FACT complex and is specifically present at 35S ribosomal DNA locus. This Leishmania major protein is rRNA 2'-O-methyltransferase fibrillarin.